A 336-amino-acid chain; its full sequence is UPF0324 membrane protein spr0034 (336 aa).

8 helical membrane passes run Leu-65–Ala-84, Pro-91–Leu-113, Ala-118–Ile-140, Val-153–Ser-175, Ser-211–Trp-233, Val-249–Gly-271, Phe-286–Val-305, and Ile-312–Gly-334.

It belongs to the UPF0324 family.

The protein localises to the cell membrane. The protein is UPF0324 membrane protein spr0034 of Streptococcus pneumoniae (strain ATCC BAA-255 / R6).